The following is a 682-amino-acid chain: Inactive protein-arginine deiminase type-6 (682 aa).

S2 and S434 each carry phosphoserine.

This sequence belongs to the protein arginine deiminase family. As to quaternary structure, homodimers. Associates with alpha-tubulin. Phosphorylation at Ser-2, possibly by RSK-type kinases, and Ser-434 creates binding sites for 14-3-3 proteins. As to expression, expressed at very high levels in oocytes. Weakly expressed in testis. Expressed in primordial, primary, secondary and Graafian follicles, and in immature oocytes, mature eggs and blastocyst (at protein level).

It is found in the cytoplasm. The protein localises to the nucleus. It localises to the cytoplasmic vesicle. The protein resides in the secretory vesicle. Its subcellular location is the cortical granule. Its function is as follows. Structural constituent of cytoplasmic lattices, which plays a key role in early embryonic development. Cytoplasmic lattices consist in fibrous structures found in the cytoplasm of oocytes and preimplantation embryos. They are required to store maternal proteins critical for embryonic development, such as ribosomal proteins and proteins that control epigenetic reprogramming of the preimplantation embryo, and prevent their degradation or activation. In contrast to other members of the family, does not show protein-arginine deiminase activity due to its inability to bind Ca(2+). This is Inactive protein-arginine deiminase type-6 from Mus musculus (Mouse).